A 353-amino-acid chain; its full sequence is UDP-3-O-acylglucosamine N-acyltransferase (353 aa).

Histidine 242 acts as the Proton acceptor in catalysis.

Belongs to the transferase hexapeptide repeat family. LpxD subfamily. As to quaternary structure, homotrimer.

The enzyme catalyses a UDP-3-O-[(3R)-3-hydroxyacyl]-alpha-D-glucosamine + a (3R)-hydroxyacyl-[ACP] = a UDP-2-N,3-O-bis[(3R)-3-hydroxyacyl]-alpha-D-glucosamine + holo-[ACP] + H(+). It participates in bacterial outer membrane biogenesis; LPS lipid A biosynthesis. Catalyzes the N-acylation of UDP-3-O-acylglucosamine using 3-hydroxyacyl-ACP as the acyl donor. Is involved in the biosynthesis of lipid A, a phosphorylated glycolipid that anchors the lipopolysaccharide to the outer membrane of the cell. This Pseudomonas aeruginosa (strain LESB58) protein is UDP-3-O-acylglucosamine N-acyltransferase.